We begin with the raw amino-acid sequence, 209 residues long: Inner membrane protein YjdF (209 aa).

Residues 1–7 (MTRTLKP) lie on the Periplasmic side of the membrane. A helical transmembrane segment spans residues 8-28 (LILNTSALTLTLILIYTGISA). The Cytoplasmic portion of the chain corresponds to 29–31 (HDK). The helical transmembrane segment at 32–52 (LTWLMEVTPVIIVVQLLLATA) threads the bilayer. Residues 53–55 (RRY) lie on the Periplasmic side of the membrane. Residues 56–76 (PLTPLLYTLIFLHAIILMVGG) traverse the membrane as a helical segment. Over 77-131 (QYTYAKVPVGFEVQEWLGLSRNPYDKLGHFFQGLVPALVAREILVRGMYVRGRKM) the chain is Cytoplasmic. Residues 132-152 (VAFLVCCVALAISAMYELIEW) traverse the membrane as a helical segment. At 153–177 (WAALAMGQGADDFLGTQGDQWDTQS) the chain is on the periplasmic side. A helical membrane pass occupies residues 178 to 198 (DMFCALLGALTTVIFLARFHC). Over 199–209 (RQLRRFGLITG) the chain is Cytoplasmic.

It is found in the cell inner membrane. This Escherichia coli (strain K12) protein is Inner membrane protein YjdF (yjdF).